Here is a 138-residue protein sequence, read N- to C-terminus: Gonadotropin subunit beta-2 (138 aa).

The signal sequence occupies residues 1–21; it reads MPASSYFLLFFFMNFFSPAQS. 6 disulfides stabilise this stretch: C27-C75, C41-C90, C44-C128, C52-C106, C56-C108, and C111-C118. Residue N31 is glycosylated (N-linked (GlcNAc...) asparagine).

Belongs to the glycoprotein hormones subunit beta family. Heterodimer of an alpha and a beta chain.

It is found in the secreted. Functionally, involved in gametogenesis and steroidogenesis. This Clarias gariepinus (North African catfish) protein is Gonadotropin subunit beta-2 (cgbb).